The primary structure comprises 335 residues: Probable cytosolic iron-sulfur protein assembly protein Ciao1 (335 aa).

WD repeat units follow at residues 12-51, 57-96, 101-140, 146-185, 192-231, 250-289, and 301-335; these read GHKGRIWGVAWHPKGNVFASCGEDKAIRIWSLTGNTWSTK, GHKRTIREIQWSPCGQYLASASFDATTAIWSKSSGEFECN, GHENEVKSVSWSRSGGLLATCSRDKSVWIWEVAGDDEFEC, SHTQDVKRVVWHPTKEILASASYDNTIKMYAEEPIDNDWD, SHTSTIWGIDFDADGERLVSCSDDTTVKIWRAYHPGNSAG, QHSRAIYDVSWCKLTGLIATACGDDGIRIFKETSDSKPDE, and AHDQDVNSVQWNPVVAGQLISCSDDGTIKIWKVTE.

This sequence belongs to the WD repeat CIA1 family.

Functionally, essential component of the cytosolic iron-sulfur (Fe/S) protein assembly machinery. Required for the maturation of extramitochondrial Fe/S proteins. The protein is Probable cytosolic iron-sulfur protein assembly protein Ciao1 of Drosophila yakuba (Fruit fly).